The primary structure comprises 198 residues: NAD(P)H dehydrogenase (quinone) (198 aa).

A Flavodoxin-like domain is found at 4–189 (ILVLYYSMYG…SIARYQGEYV (186 aa)). FMN is bound by residues 10-15 (SMYGHI) and 78-80 (TRF). Y12 is an NAD(+) binding site. W98 serves as a coordination point for substrate. Residues 113–118 (STGTGG) and H133 contribute to the FMN site.

Belongs to the WrbA family. Requires FMN as cofactor.

It carries out the reaction a quinone + NADH + H(+) = a quinol + NAD(+). The enzyme catalyses a quinone + NADPH + H(+) = a quinol + NADP(+). The sequence is that of NAD(P)H dehydrogenase (quinone) from Salmonella typhi.